Here is a 450-residue protein sequence, read N- to C-terminus: Phosphoglucosamine mutase (450 aa).

Residue Ser-97 is the Phosphoserine intermediate of the active site. Ser-97, Asp-236, Asp-238, and Asp-240 together coordinate Mg(2+). Ser-97 carries the post-translational modification Phosphoserine.

The protein belongs to the phosphohexose mutase family. The cofactor is Mg(2+). Activated by phosphorylation.

The catalysed reaction is alpha-D-glucosamine 1-phosphate = D-glucosamine 6-phosphate. Functionally, catalyzes the conversion of glucosamine-6-phosphate to glucosamine-1-phosphate. This chain is Phosphoglucosamine mutase, found in Prochlorococcus marinus (strain MIT 9215).